The sequence spans 401 residues: Argininosuccinate synthase (401 aa).

Residue 9-17 participates in ATP binding; the sequence is AYSGGLDTS. Residue Tyr86 coordinates L-citrulline. An ATP-binding site is contributed by Gly116. The L-aspartate site is built by Thr118, Asn122, and Asp123. Residue Asn122 coordinates L-citrulline. Residues Arg126, Ser174, Ser183, Glu259, and Tyr271 each coordinate L-citrulline.

This sequence belongs to the argininosuccinate synthase family. Type 1 subfamily. Homotetramer.

Its subcellular location is the cytoplasm. The enzyme catalyses L-citrulline + L-aspartate + ATP = 2-(N(omega)-L-arginino)succinate + AMP + diphosphate + H(+). Its pathway is amino-acid biosynthesis; L-arginine biosynthesis; L-arginine from L-ornithine and carbamoyl phosphate: step 2/3. The polypeptide is Argininosuccinate synthase (Bacillus mycoides (strain KBAB4) (Bacillus weihenstephanensis)).